An 882-amino-acid polypeptide reads, in one-letter code: Putative HTH-type transcriptional regulator Mb0914c (882 aa).

The 66-residue stretch at 814 to 879 (PARGWGSLTP…QLVDEAARRG (66 aa)) folds into the HTH luxR-type domain. A DNA-binding region (H-T-H motif) is located at residues 838–857 (NKDIAKRLFVSPRTVQTHLT).

The protein is Putative HTH-type transcriptional regulator Mb0914c of Mycobacterium bovis (strain ATCC BAA-935 / AF2122/97).